We begin with the raw amino-acid sequence, 1207 residues long: DNA-directed RNA polymerase subunit beta' (1207 aa).

Positions 60, 62, 75, and 78 each coordinate Zn(2+). Mg(2+) contacts are provided by D449, D451, and D453. Zn(2+) is bound by residues C822, C896, C903, and C906.

Belongs to the RNA polymerase beta' chain family. The RNAP catalytic core consists of 2 alpha, 1 beta, 1 beta' and 1 omega subunit. When a sigma factor is associated with the core the holoenzyme is formed, which can initiate transcription. Mg(2+) is required as a cofactor. Zn(2+) serves as cofactor.

It catalyses the reaction RNA(n) + a ribonucleoside 5'-triphosphate = RNA(n+1) + diphosphate. DNA-dependent RNA polymerase catalyzes the transcription of DNA into RNA using the four ribonucleoside triphosphates as substrates. The protein is DNA-directed RNA polymerase subunit beta' of Staphylococcus epidermidis (strain ATCC 35984 / DSM 28319 / BCRC 17069 / CCUG 31568 / BM 3577 / RP62A).